A 184-amino-acid polypeptide reads, in one-letter code: Large ribosomal subunit protein uL6 (184 aa).

The protein belongs to the universal ribosomal protein uL6 family. Part of the 50S ribosomal subunit.

In terms of biological role, this protein binds to the 23S rRNA, and is important in its secondary structure. It is located near the subunit interface in the base of the L7/L12 stalk, and near the tRNA binding site of the peptidyltransferase center. The polypeptide is Large ribosomal subunit protein uL6 (Thermosipho melanesiensis (strain DSM 12029 / CIP 104789 / BI429)).